Here is a 955-residue protein sequence, read N- to C-terminus: MPSLSLSKLLRVGEGRMVKRLKHIADHVSSLSPEVEDLTDEQLRAKTEEFRARYRDGETLDELLPEAFAVAREASWRVIDQRHFHVQIMGGAALHFGNIAEMKTGEGKTLTCVLPAYLNAIAGDGVHVVTVNDYLAKRDSEWMGRVHRFLGLDTSVILSGMSPAERRAAYAADITYGTNNEFGFDYLRDNMTHSLDDLVQRGHNFAVVDEVDSILIDEARTPLIISGPADASSKWYAEFARIAPLLKRDVHYEVDIRKRTIGVHEAGVELVEDQLGIDNLYEAANSPLVSYLNNAIKAKELYTKDKDYIVRDGEVIIVDEFTGRVLVGRRYNEGMHQAIEAKEKVEIKAENQTLATITLQNYFRLYDKLSGMTGTAETEAAELHQIYNLGVIPIPTNRPMVRVDNGDLIYKTEEAKFHAVVDDVVERHEKGQPVLIGTTSVERSEYLSKQFTKRGVAHNVLNAKFHEQEAQIIAEAGRSGAVTVATNMAGRGTDVVLGGNPDIIADIALRKQGLDPVHTPDDYEAAWDDVLDQVKAEVKADADKVREAGGLYVLGTERHESRRIDNQLRGRSGRQGDPGESRFYLSLGDELMRRFNGAALESIMTRLNLPDDVPIEAKMVSKAIKSAQTQVEQQNFEIRKNVLKYDEVMNQQRTVIYNERRQILEGKDMEGQVEKMITDVVTAYVDGATAEGYVEDWDLEQLWTALKTLYPIGVDYKELVGDGDDETKDITAEELRETLLKDAHDAYARREAEIDGVAGEGSMRELERRVLLSVLDRKWREHLYEMDYLKEGIGLRAMAQRDPLVEYQREGFDMFGGMLEGLKEESVGFLFNLQVEAAAPQAAQAPGVSVTAASAAATASAAPAPAAPRPLPTQEAAQQAQGTAAPSALRAKGLDDGEPRGLTYSGPAEDGNAQLSRRGAAESDDSADAGTRRQRREAARSQSKGKKAPRTKRKR.

ATP contacts are provided by residues Gln87, 105–109 (GEGKT), and Asp494. Residues 861-955 (AAPAPAAPRP…KKAPRTKRKR (95 aa)) form a disordered region. Over residues 874–888 (QEAAQQAQGTAAPSA) the composition is skewed to low complexity. Basic residues predominate over residues 943-955 (SKGKKAPRTKRKR).

This sequence belongs to the SecA family. In terms of assembly, monomer and homodimer. Part of the essential Sec protein translocation apparatus which comprises SecA, SecYEG and auxiliary proteins SecDF. Other proteins may also be involved.

The protein localises to the cell membrane. It is found in the cytoplasm. It catalyses the reaction ATP + H2O + cellular proteinSide 1 = ADP + phosphate + cellular proteinSide 2.. Part of the Sec protein translocase complex. Interacts with the SecYEG preprotein conducting channel. Has a central role in coupling the hydrolysis of ATP to the transfer of proteins into and across the cell membrane, serving as an ATP-driven molecular motor driving the stepwise translocation of polypeptide chains across the membrane. This chain is Protein translocase subunit SecA, found in Rhodococcus opacus (strain B4).